We begin with the raw amino-acid sequence, 273 residues long: Transmembrane protein 202 (273 aa).

The next 4 membrane-spanning stretches (helical) occupy residues 53–75, 121–141, 155–175, and 189–209; these read HIYI…IAMS, FFLI…SSWI, VSML…LFVA, and LLWT…AGII. Residues 242-273 form a disordered region; sequence TTVSPAKDEGPRSEMESLSVREKNLPKSGLWW. Positions 247–266 are enriched in basic and acidic residues; the sequence is AKDEGPRSEMESLSVREKNL.

The protein resides in the membrane. This chain is Transmembrane protein 202 (TMEM202), found in Homo sapiens (Human).